The primary structure comprises 45 residues: MTSGNNINQPVTYPIFTVRWIAVHTLAVPTVFFLGAIASMQFIQR.

Residues 20–36 (WIAVHTLAVPTVFFLGA) form a helical membrane-spanning segment. His-24 provides a ligand contact to heme.

It belongs to the PsbE/PsbF family. Heterodimer of an alpha subunit and a beta subunit. PSII is composed of 1 copy each of membrane proteins PsbA, PsbB, PsbC, PsbD, PsbE, PsbF, PsbH, PsbI, PsbJ, PsbK, PsbL, PsbM, PsbT, PsbX, PsbY, PsbZ, Psb30/Ycf12, peripheral proteins PsbO, CyanoQ (PsbQ), PsbU, PsbV and a large number of cofactors. It forms dimeric complexes. Heme b serves as cofactor.

It localises to the cellular thylakoid membrane. In terms of biological role, this b-type cytochrome is tightly associated with the reaction center of photosystem II (PSII). PSII is a light-driven water:plastoquinone oxidoreductase that uses light energy to abstract electrons from H(2)O, generating O(2) and a proton gradient subsequently used for ATP formation. It consists of a core antenna complex that captures photons, and an electron transfer chain that converts photonic excitation into a charge separation. This Nostoc sp. (strain PCC 7120 / SAG 25.82 / UTEX 2576) protein is Cytochrome b559 subunit beta.